Consider the following 598-residue polypeptide: Terpenoid synthase 1 (598 aa).

Residues aspartate 362, aspartate 366, asparagine 494, and aspartate 502 each contribute to the Mg(2+) site. The short motif at 362 to 366 is the DDXXD motif element; sequence DDTCD.

Belongs to the terpene synthase family. Tpsa subfamily. The cofactor is Mg(2+). It depends on Mn(2+) as a cofactor. Expressed exclusively in siliques.

It is found in the cytoplasm. Its pathway is secondary metabolite biosynthesis; terpenoid biosynthesis. The chain is Terpenoid synthase 1 (TPS01) from Arabidopsis thaliana (Mouse-ear cress).